We begin with the raw amino-acid sequence, 974 residues long: Collagen alpha-1(I) chain (974 aa).

Residues 1-14 (GISVPGPMGPSGPR) are compositionally biased toward low complexity. The segment at 1 to 974 (GISVPGPMGP…PGPPGPPGPP (974 aa)) is disordered. 4-hydroxyproline occurs at positions 17, 20, 23, 32, 35, 38, 53, 68, 75, and 81. Low complexity predominate over residues 25–44 (PQGFQGPPGEPGEPGASGPM). Basic and acidic residues predominate over residues 56 to 73 (NGDDGEAGKPGRPGERRG). Lys84 is modified (5-hydroxylysine; alternate). Residue Lys84 is glycosylated (O-linked (Gal...) hydroxylysine; alternate). Position 90 is a phosphoserine (Ser90). The span at 98–114 (DAGPAGPKGEPGSPGEN) shows a compositional bias: low complexity. Pro108, Pro111, Pro117, Pro126, Pro132, Pro153, Pro162, Pro165, Pro192, Pro195, Pro207, Pro213, Pro222, Pro228, Pro231, and Pro245 each carry 4-hydroxyproline. Residues 132 to 150 (PGASGPAGARGNDGATGAA) are compositionally biased toward low complexity. Residues 152–164 (PPGPTGPAGPPGF) are compositionally biased toward pro residues. Over residues 198-228 (AGAAGPAGNPGADGQPGAKGANGAPGIAGAP) the composition is skewed to low complexity. At Lys248 the chain carries 5-hydroxylysine. 4-hydroxyproline is present on residues Pro254, Pro257, Pro269, Pro278, Pro293, Pro299, Pro308, and Pro314. Positions 303-312 (GERGGPGSRG) are enriched in gly residues. A 5-hydroxylysine modification is found at Lys323. 4-hydroxyproline is present on residues Pro328, Pro337, Pro343, Pro349, Pro358, Pro361, Pro370, Pro379, Pro385, Pro397, Pro406, Pro415, Pro418, Pro436, Pro454, Pro460, Pro466, Pro472, Pro484, Pro493, Pro505, Pro520, Pro527, and Pro536. Residues 352–378 (KGLTGSPGSPGPDGKTGPPGPAGQDGR) are compositionally biased toward low complexity. Over residues 387–406 (ARGQAGVMGFPGPKGAAGEP) the composition is skewed to low complexity. Over residues 504–517 (APGNDGAKGDAGAP) the composition is skewed to low complexity. Lys548 is subject to 5-hydroxylysine. Pro554, Pro569, and Pro575 each carry 4-hydroxyproline. Residues 581–595 (SGPSGPAGPTGARGA) show a composition bias toward low complexity. Ser584 is modified (phosphoserine). A 4-hydroxyproline mark is found at Pro596, Pro602, Pro605, Pro614, Pro620, Pro638, Pro647, and Pro656. Over residues 608 to 635 (AGFAGPPGADGQPGAKGEPGDAGAKGDA) the composition is skewed to low complexity. The span at 637-649 (PPGPAGPTGPPGP) shows a compositional bias: pro residues. Lys659 is modified (5-hydroxylysine). A compositionally biased stretch (low complexity) spans 664–680 (SAGPPGATGFPGAAGRV). 2 positions are modified to 4-hydroxyproline: Pro668 and Pro674. The residue at position 682 (Pro682) is a 3-hydroxyproline. A 4-hydroxyproline mark is found at Pro683, Pro692, Pro695, Pro716, Pro725, Pro733, Pro742, Pro760, Pro769, Pro772, Pro778, Pro793, Pro799, Pro805, Pro814, and Pro820. A compositionally biased stretch (low complexity) spans 709-718 (ETGPAGRPGE). Over residues 730–742 (KGSPGADGPAGAP) the composition is skewed to low complexity. A compositionally biased stretch (pro residues) spans 792–802 (PPGPVGPPGLA). Residues 804–826 (PPGESGREGSPGAEGSPGRDGSP) are compositionally biased toward low complexity. The span at 828–844 (PKGPPGAPGAPGAPGPV) shows a compositional bias: pro residues. The residue at position 829 (Lys829) is a 5-hydroxylysine. Residues Pro832, Pro835, and Pro838 each carry the 4-hydroxyproline modification. The span at 865–879 (AGPAGARGPAGPQGP) shows a compositional bias: low complexity. Over residues 880 to 894 (RGDKGETGEQGDRRG) the composition is skewed to basic and acidic residues. Lys883 carries the 5-hydroxylysine modification. A 4-hydroxyproline mark is found at Pro905, Pro908, Pro926, and Pro941. A compositionally biased stretch (low complexity) spans 908-941 (PGEQGPSGASGPAGPRGPPGSAGSPGKDGLNGLP). Pro946 bears the 3-hydroxyproline mark. A 4-hydroxyproline modification is found at Pro947. Residues 959–974 (VGPPGPPGPPGPPGPP) are compositionally biased toward pro residues. A 3-hydroxyproline modification is found at Pro961. Position 962 is a 4-hydroxyproline (Pro962). Pro964 carries the post-translational modification 3-hydroxyproline. Pro965 is modified (4-hydroxyproline). Pro967 is subject to 3-hydroxyproline. A 4-hydroxyproline mark is found at Pro968, Pro971, and Pro974.

Belongs to the fibrillar collagen family. In terms of assembly, trimers of one alpha 2(I) and two alpha 1(I) chains. Post-translationally, contains mostly 4-hydroxyproline. Proline residues at the third position of the tripeptide repeating unit (G-X-Y) are hydroxylated in some or all of the chains. In terms of processing, contains 3-hydroxyproline at a few sites. This modification occurs on the first proline residue in the sequence motif Gly-Pro-Hyp, where Hyp is 4-hydroxyproline. Lysine residues at the third position of the tripeptide repeating unit (G-X-Y) are 5-hydroxylated in some or all of the chains. Post-translationally, O-glycosylated on hydroxylated lysine residues. The O-linked glycan consists of a Glc-Gal disaccharide. Expressed in bones.

It localises to the secreted. The protein resides in the extracellular space. It is found in the extracellular matrix. Type I collagen is a member of group I collagen (fibrillar forming collagen). The chain is Collagen alpha-1(I) chain from Scelidodon sp. (strain SLP-2019) (South American ground sloth).